Consider the following 459-residue polypeptide: Glycosyl hydrolase family 109 protein (459 aa).

The segment at residues 1 to 31 is a signal peptide (tat-type signal); the sequence is MHNIHRRNFLKAAGAATAGLVTANIALNAYA. Residues 64–65, D86, 135–138, 155–156, and N184 each bind NAD(+); these read ER, WEWH, and EV. Substrate-binding positions include Y213, R232, 244–247, and Y326; that span reads YPTH. Y244 is an NAD(+) binding site.

This sequence belongs to the Gfo/Idh/MocA family. Glycosyl hydrolase 109 subfamily. NAD(+) is required as a cofactor. Predicted to be exported by the Tat system. The position of the signal peptide cleavage has not been experimentally proven.

Glycosidase. This Shewanella baltica (strain OS155 / ATCC BAA-1091) protein is Glycosyl hydrolase family 109 protein.